The sequence spans 452 residues: Multifunctional glycoside hydrolase (452 aa).

Positions 17, 118, and 162 each coordinate substrate. Glu163 serves as the catalytic Proton donor. Tyr303 contributes to the substrate binding site. Catalysis depends on Glu361, which acts as the Nucleophile. Substrate is bound by residues Trp407 and Glu414–Trp415.

This sequence belongs to the glycosyl hydrolase 1 family. Monomer. Homotrimer.

It carries out the reaction Hydrolysis of terminal, non-reducing beta-D-glucosyl residues with release of beta-D-glucose.. The catalysed reaction is Hydrolysis of terminal non-reducing beta-D-galactose residues in beta-D-galactosides.. It catalyses the reaction Hydrolysis of (1-&gt;4)-beta-D-xylans, to remove successive D-xylose residues from the non-reducing termini.. The enzyme catalyses Hydrolysis of (1-&gt;4)-linkages in (1-&gt;4)-beta-D-glucans, to remove successive glucose units.. It carries out the reaction Hydrolysis of (1-&gt;4)-beta-D-glucosidic linkages in cellulose and cellotetraose, releasing cellobiose from the non-reducing ends of the chains.. The protein operates within glycan metabolism; beta-D-glucan degradation. Its pathway is glycan metabolism; cellulose degradation. Its activity is regulated as follows. Slight activation by Mn(2+), Ni(2+) and K(+). Slight inhibition by Fe(3+), Zn(2+), Co(2+), Mg(2+), Cu(2+), Na(+) and NH4(+). Functionally, has high beta-D-glucosidase, exoglucanase, beta-D-xylosidase, beta-D-galactosidase, and transgalactosylation activities in vitro. Has a very broad substrate specificity with the highest activity with p-nitrophenyl beta-D-galactopyranoside (pNPGal) as substrate. Active with pNP-beta-D-glucopyranoside (pNPGlu), pNP-beta-D-cellobioside (pNPC), lactose, pNP-beta-D-xylopyranoside (pNPX) and cellobiose in the order of decreasing activity, respectively. Very low activity with soluble polysaccharides synanthrin and locust bean gum. Very low, but detectable activity with insoluble substrates such as cotton and filter paper. No activity with pNP-alpha-L-arabinofuranoside (pNPAr) or carboxymethylcellulose (CMC) as substrates. Synthesizes galactooligosaccharides (GalOS) from lactose. Hydrolyzes pretreated corn stover releasing both glucose and xylose. This multifunctional enzyme may provide C.owensensis the benefit of utilizing a wide variety of available carbon sources in its natural growing environment as the ability to convert a wide range of soluble oligosaccharides to monoses is required in order to assimilate them. This chain is Multifunctional glycoside hydrolase, found in Caldicellulosiruptor owensensis (strain ATCC 700167 / DSM 13100 / OL).